We begin with the raw amino-acid sequence, 93 residues long: Em protein H5 (93 aa).

The interval 1–93 is disordered; it reads MASGQQERSE…IDESKFKTKS (93 aa). Composition is skewed to basic and acidic residues over residues 7–19, 32–62, and 73–93; these read ERSELDRMAREGE, EAQEHLADGRSRGGETRKEQLGEEGYREMGR, and GGERAAREGIEIDESKFKTKS.

This sequence belongs to the small hydrophilic plant seed protein family.

Functionally, it is thought to provide protection for the cytoplasm during the desiccation stage of embryo development. The protein is Em protein H5 (EMH5) of Triticum aestivum (Wheat).